Consider the following 195-residue polypeptide: Probable molybdenum cofactor guanylyltransferase (195 aa).

GTP contacts are provided by residues 9–11, Lys21, Asp69, and Asp100; that span reads LAG. Residue Asp100 coordinates Mg(2+).

This sequence belongs to the MobA family. Requires Mg(2+) as cofactor.

It is found in the cytoplasm. The catalysed reaction is Mo-molybdopterin + GTP + H(+) = Mo-molybdopterin guanine dinucleotide + diphosphate. In terms of biological role, transfers a GMP moiety from GTP to Mo-molybdopterin (Mo-MPT) cofactor (Moco or molybdenum cofactor) to form Mo-molybdopterin guanine dinucleotide (Mo-MGD) cofactor. The sequence is that of Probable molybdenum cofactor guanylyltransferase from Geobacillus sp. (strain WCH70).